Consider the following 415-residue polypeptide: Gamma-glutamyl phosphate reductase (415 aa).

The protein belongs to the gamma-glutamyl phosphate reductase family.

The protein localises to the cytoplasm. The catalysed reaction is L-glutamate 5-semialdehyde + phosphate + NADP(+) = L-glutamyl 5-phosphate + NADPH + H(+). Its pathway is amino-acid biosynthesis; L-proline biosynthesis; L-glutamate 5-semialdehyde from L-glutamate: step 2/2. Its function is as follows. Catalyzes the NADPH-dependent reduction of L-glutamate 5-phosphate into L-glutamate 5-semialdehyde and phosphate. The product spontaneously undergoes cyclization to form 1-pyrroline-5-carboxylate. This chain is Gamma-glutamyl phosphate reductase, found in Carboxydothermus hydrogenoformans (strain ATCC BAA-161 / DSM 6008 / Z-2901).